The following is a 274-amino-acid chain: Halorhodopsin (274 aa).

Residues 1-21 constitute a propeptide that is removed on maturation; it reads MSITSVPGVVDAGVLGAQSAA. Residues 22 to 25 are Extracellular-facing; it reads AVRE. Residues 26–51 form a helical membrane-spanning segment; sequence NALLSSSLWVNVALAGIAILVFVYMG. Topologically, residues 52-57 are cytoplasmic; sequence RTIRPG. A helical transmembrane segment spans residues 58-81; it reads RPRLIWGATLMIPLVSISSYLGLL. The Extracellular portion of the chain corresponds to 82 to 105; it reads SGLTVGMIEMPAGHALAGEMVRSQ. 3 residues coordinate chloride: Q105, T111, and S115. A helical membrane pass occupies residues 106 to 127; it reads WGRYLTWALSTPMILLALGLLA. Residues 128–130 are Cytoplasmic-facing; it reads DVD. Residues 131-154 form a helical membrane-spanning segment; sequence LGSLFTVIAADIGMCVTGLAAAMT. Over 155–157 the chain is Extracellular; it reads TSA. The chain crosses the membrane as a helical span at residues 158-180; the sequence is LLFRWAFYAISCAFFVVVLSALV. The Cytoplasmic portion of the chain corresponds to 181 to 192; it reads TDWAASASSAGT. The helical transmembrane segment at 193–216 threads the bilayer; sequence AEIFDTLRVLTVVLWLGYPIVWAV. Over 217-226 the chain is Extracellular; sequence GVEGLALVQS. A helical membrane pass occupies residues 227–255; it reads VGVTSWAYSVLDVFAKYVFAFILLRWVAN. K242 is modified (N6-(retinylidene)lysine). Residues 256-274 lie on the Cytoplasmic side of the membrane; it reads NERTVAVAGQTLGTMSSDD.

This sequence belongs to the archaeal/bacterial/fungal opsin family. Homotrimer.

Its subcellular location is the cell membrane. In terms of biological role, light-driven chloride pump. The protein is Halorhodopsin (hop) of Halobacterium salinarum (strain ATCC 29341 / DSM 671 / R1).